The following is a 495-amino-acid chain: UDP-N-acetylmuramate--L-alanine ligase (495 aa).

153–159 (GTHGKTT) serves as a coordination point for ATP.

This sequence belongs to the MurCDEF family.

The protein resides in the cytoplasm. It catalyses the reaction UDP-N-acetyl-alpha-D-muramate + L-alanine + ATP = UDP-N-acetyl-alpha-D-muramoyl-L-alanine + ADP + phosphate + H(+). The protein operates within cell wall biogenesis; peptidoglycan biosynthesis. Cell wall formation. The polypeptide is UDP-N-acetylmuramate--L-alanine ligase (Gloeothece citriformis (strain PCC 7424) (Cyanothece sp. (strain PCC 7424))).